Consider the following 581-residue polypeptide: Proline--tRNA ligase (581 aa).

Belongs to the class-II aminoacyl-tRNA synthetase family. ProS type 1 subfamily. In terms of assembly, homodimer.

It is found in the cytoplasm. It carries out the reaction tRNA(Pro) + L-proline + ATP = L-prolyl-tRNA(Pro) + AMP + diphosphate. Functionally, catalyzes the attachment of proline to tRNA(Pro) in a two-step reaction: proline is first activated by ATP to form Pro-AMP and then transferred to the acceptor end of tRNA(Pro). As ProRS can inadvertently accommodate and process non-cognate amino acids such as alanine and cysteine, to avoid such errors it has two additional distinct editing activities against alanine. One activity is designated as 'pretransfer' editing and involves the tRNA(Pro)-independent hydrolysis of activated Ala-AMP. The other activity is designated 'posttransfer' editing and involves deacylation of mischarged Ala-tRNA(Pro). The misacylated Cys-tRNA(Pro) is not edited by ProRS. The protein is Proline--tRNA ligase of Azoarcus sp. (strain BH72).